We begin with the raw amino-acid sequence, 1647 residues long: Probable ubiquitin fusion degradation protein C12B10.01c (1647 aa).

A compositionally biased stretch (polar residues) spans 192 to 209; sequence TYSDSSNYHTSTDSSQYN. 2 disordered regions span residues 192 to 288 and 1039 to 1076; these read TYSD…PSAA and ESMSGSSRNSSGDYTDSMSQDAPNHTTEPSERRDSSTS. Acidic residues-rich tracts occupy residues 218–228 and 245–273; these read DTNDGTDDDIN and ERDEDVDEEEEEDDDENNDEGDDEDENEN. A compositionally biased stretch (low complexity) spans 1039 to 1050; the sequence is ESMSGSSRNSSG. The segment covering 1051-1065 has biased composition (polar residues); it reads DYTDSMSQDAPNHTT. Over residues 1066–1076 the composition is skewed to basic and acidic residues; sequence EPSERRDSSTS. Residues 1183–1257 are K-box; that stretch reads IENILTDFSN…SVSFLLSRNP (75 aa). The region spanning 1294-1647 is the HECT domain; it reads ATYAASENIL…LEGQGSFHLS (354 aa). Cys1614 (glycyl thioester intermediate) is an active-site residue.

Belongs to the UPL family. K-HECT subfamily.

The catalysed reaction is S-ubiquitinyl-[E2 ubiquitin-conjugating enzyme]-L-cysteine + [acceptor protein]-L-lysine = [E2 ubiquitin-conjugating enzyme]-L-cysteine + N(6)-ubiquitinyl-[acceptor protein]-L-lysine.. Its function is as follows. E3 ubiquitin-protein ligase which accepts ubiquitin from an E2 ubiquitin-conjugating enzyme in the form of a thioester and then directly transfers the ubiquitin to targeted substrates. This Schizosaccharomyces pombe (strain 972 / ATCC 24843) (Fission yeast) protein is Probable ubiquitin fusion degradation protein C12B10.01c.